A 526-amino-acid chain; its full sequence is Peptide chain release factor 3 (526 aa).

Residues 9-277 (DRRRTFAIVS…TFVDHAPAPL (269 aa)) form the tr-type G domain. Residues 18-25 (SHPDAGKT), 86-90 (DTPGH), and 140-143 (NKLD) each bind GTP.

The protein belongs to the TRAFAC class translation factor GTPase superfamily. Classic translation factor GTPase family. PrfC subfamily.

The protein localises to the cytoplasm. Functionally, increases the formation of ribosomal termination complexes and stimulates activities of RF-1 and RF-2. It binds guanine nucleotides and has strong preference for UGA stop codons. It may interact directly with the ribosome. The stimulation of RF-1 and RF-2 is significantly reduced by GTP and GDP, but not by GMP. This Geobacter sulfurreducens (strain ATCC 51573 / DSM 12127 / PCA) protein is Peptide chain release factor 3.